Reading from the N-terminus, the 114-residue chain is Putative membrane protein insertion efficiency factor (114 aa).

It belongs to the UPF0161 family.

Its subcellular location is the cell inner membrane. In terms of biological role, could be involved in insertion of integral membrane proteins into the membrane. The chain is Putative membrane protein insertion efficiency factor from Wolinella succinogenes (strain ATCC 29543 / DSM 1740 / CCUG 13145 / JCM 31913 / LMG 7466 / NCTC 11488 / FDC 602W) (Vibrio succinogenes).